A 284-amino-acid chain; its full sequence is 2-dehydro-3-deoxyphosphooctonate aldolase (284 aa).

Belongs to the KdsA family.

It is found in the cytoplasm. The enzyme catalyses D-arabinose 5-phosphate + phosphoenolpyruvate + H2O = 3-deoxy-alpha-D-manno-2-octulosonate-8-phosphate + phosphate. Its pathway is carbohydrate biosynthesis; 3-deoxy-D-manno-octulosonate biosynthesis; 3-deoxy-D-manno-octulosonate from D-ribulose 5-phosphate: step 2/3. It participates in bacterial outer membrane biogenesis; lipopolysaccharide biosynthesis. In Burkholderia multivorans (strain ATCC 17616 / 249), this protein is 2-dehydro-3-deoxyphosphooctonate aldolase.